The sequence spans 735 residues: Ion-translocating oxidoreductase complex subunit C (735 aa).

4Fe-4S ferredoxin-type domains lie at Met368–Tyr397 and Lys407–Phe436. Cys377, Cys380, Cys383, Cys387, Cys416, Cys419, Cys422, and Cys426 together coordinate [4Fe-4S] cluster. Positions Gln534–Lys711 are disordered.

This sequence belongs to the 4Fe4S bacterial-type ferredoxin family. RnfC subfamily. In terms of assembly, the complex is composed of six subunits: RsxA, RsxB, RsxC, RsxD, RsxE and RsxG. [4Fe-4S] cluster is required as a cofactor.

Its subcellular location is the cell inner membrane. Its function is as follows. Part of a membrane-bound complex that couples electron transfer with translocation of ions across the membrane. Required to maintain the reduced state of SoxR. The polypeptide is Ion-translocating oxidoreductase complex subunit C (Salmonella paratyphi A (strain ATCC 9150 / SARB42)).